Reading from the N-terminus, the 493-residue chain is Neisserial heparin binding antigen (493 aa).

The signal sequence occupies residues 1–22; sequence MKEMMMFKRSVIAMACIFALSA. A lipid anchor (N-palmitoyl cysteine) is attached at C23. A lipid anchor (S-diacylglycerol cysteine) is attached at C23. Positions 27 to 206 are disordered; that stretch reads GGGSPDVKSA…NPAPANGGSN (180 aa). Positions 48-58 are enriched in basic and acidic residues; it reads SEKETEAKEDA. Residues 59-75 are compositionally biased toward low complexity; sequence PQAGSQGQGAPSAQGSQ. Polar residues-rich tracts occupy residues 106 to 123 and 132 to 147; these read DMPQNAAGTDSSTPNHTP and MENQATDAGESSQPAN. The segment covering 165-188 has biased composition (low complexity); it reads AGGQNAGNTAAQGANQAGNNQAAG. An Arg-rich motif motif is present at residues 301 to 311; it reads RFRRSARSRRS.

It belongs to the NHBA family. As to quaternary structure, the C-terminal beta-barrel forms a monomer. In terms of processing, cleaved in vivo by the Neisserial phase-variable autotransporter/serine protease NalP to give 2 fragments. The N-terminus remains in the cell outer membrane while the C-terminus (beginning on Ser-298) is soluble; this soluble fragment is called C2. Cleaved in vitro by human lactoferrin (LTF, between Arg-310 and Ser-311), this fragment is called C1. Recombinant and cell surface protein is cleaved by human saliva kallikrein (KLK1) between Ser-308 and Arg-309; in saliva kallikrein is more active on NHBA than lactoferrin. Human plasma kallikrein (KLKB1) cleaves in a similar manner to KLK1.

It is found in the cell outer membrane. A major human immunogenic protein detected in patients recovering from meningitidis, where it induces bactericidal antibodies. Binds human cells, heparin and heparan sulfate proteoglycan in vitro via the Arg-rich motif. Heparin-binding to this protein protects bacteria against killing by bactericidal antibodies (serum killing). The bacteria binds a number of human extracellular sialyated and/or sulfated glycans via this protein, including chondroitin sulfate, heparin and ganglioside GT3. Whole protein binds DNA. Functionally, plays a role in extracellular-DNA (eDNA) mediated biofilm formation. In some strains (including cc32 strain H44/76 but not cc11 strain B16B6) eDNA stimulates biofilm formation. When NHBA is not processed by NalP, biofilm formation increases. This is probably because the number of positively charged, NHBA- and IgA-derived DNA-binding peptides on the cell surface rises, resulting in increased DNA-binding peptides and increased biofilm formation. The polypeptide is Neisserial heparin binding antigen (Neisseria meningitidis serogroup B / serotype 15 (strain H44/76)).